The chain runs to 81 residues: Exodeoxyribonuclease 7 small subunit (81 aa).

The protein belongs to the XseB family. In terms of assembly, heterooligomer composed of large and small subunits.

The protein resides in the cytoplasm. It carries out the reaction Exonucleolytic cleavage in either 5'- to 3'- or 3'- to 5'-direction to yield nucleoside 5'-phosphates.. Bidirectionally degrades single-stranded DNA into large acid-insoluble oligonucleotides, which are then degraded further into small acid-soluble oligonucleotides. This Rhodopseudomonas palustris (strain BisA53) protein is Exodeoxyribonuclease 7 small subunit.